The following is a 948-amino-acid chain: Valine--tRNA ligase (948 aa).

The 'HIGH' region motif lies at 40–50 (PNVTGSLHMGH). Positions 551 to 555 (KMSKS) match the 'KMSKS' region motif. Lysine 554 contributes to the ATP binding site. Residues 879–945 (LIDKGAELAR…GKLAEQHARI (67 aa)) adopt a coiled-coil conformation.

Belongs to the class-I aminoacyl-tRNA synthetase family. ValS type 1 subfamily. Monomer.

The protein localises to the cytoplasm. It carries out the reaction tRNA(Val) + L-valine + ATP = L-valyl-tRNA(Val) + AMP + diphosphate. Functionally, catalyzes the attachment of valine to tRNA(Val). As ValRS can inadvertently accommodate and process structurally similar amino acids such as threonine, to avoid such errors, it has a 'posttransfer' editing activity that hydrolyzes mischarged Thr-tRNA(Val) in a tRNA-dependent manner. This chain is Valine--tRNA ligase, found in Pseudomonas syringae pv. tomato (strain ATCC BAA-871 / DC3000).